Here is a 172-residue protein sequence, read N- to C-terminus: Cystatin-like cysteine protease inhibitor EPIC4 (172 aa).

An N-terminal signal peptide occupies residues 1 to 17 (MRASLSILVAFPALAAA). Positions 71–75 (QVVAG) match the Secondary area of contact motif. The interval 129 to 172 (EAATASSSSTPAPTPASTSTSASSSEETMLQSSVQQRAMFSDFV) is disordered. Residues 130–156 (AATASSSSTPAPTPASTSTSASSSEET) are compositionally biased toward low complexity. Residues 157-166 (MLQSSVQQRA) show a composition bias toward polar residues.

Belongs to the cystatin family.

Its subcellular location is the secreted. Its function is as follows. Secreted effector that interacts with and inhibits host apoplastic pathogenesis-related papain-like cysteine proteases. Inhibition of host proteases by a pathogen extracellular protease inhibitor forms a specific type of defense-counterdefense mechanism between plants and microbial pathogens. The polypeptide is Cystatin-like cysteine protease inhibitor EPIC4 (Phytophthora infestans (Potato late blight agent)).